The primary structure comprises 428 residues: Enolase 1 (428 aa).

Residues 38–58 form a disordered region; it reads EVPSGASTGENEAVELRDGGS. Gln-163 provides a ligand contact to (2R)-2-phosphoglycerate. Glu-205 (proton donor) is an active-site residue. 3 residues coordinate Mg(2+): Asp-242, Glu-286, and Asp-313. Residues Lys-338, Arg-367, Ser-368, and Lys-389 each coordinate (2R)-2-phosphoglycerate. Lys-338 serves as the catalytic Proton acceptor.

This sequence belongs to the enolase family. Mg(2+) serves as cofactor.

The protein localises to the cytoplasm. Its subcellular location is the secreted. It is found in the cell surface. The enzyme catalyses (2R)-2-phosphoglycerate = phosphoenolpyruvate + H2O. It participates in carbohydrate degradation; glycolysis; pyruvate from D-glyceraldehyde 3-phosphate: step 4/5. Catalyzes the reversible conversion of 2-phosphoglycerate (2-PG) into phosphoenolpyruvate (PEP). It is essential for the degradation of carbohydrates via glycolysis. The chain is Enolase 1 from Lactobacillus gasseri (strain ATCC 33323 / DSM 20243 / BCRC 14619 / CIP 102991 / JCM 1131 / KCTC 3163 / NCIMB 11718 / NCTC 13722 / AM63).